The chain runs to 319 residues: Protein-methionine-sulfoxide reductase catalytic subunit MsrP (319 aa).

Residues 1 to 54 constitute a signal peptide (tat-type signal); the sequence is MSSFKPSRFSTARLTGDAVTPKSIYLRRREFMIGLGAIAATGAASSAFADPLEA. Residues Asn-75, 78–79, Cys-133, Asn-218, Arg-223, and 234–236 contribute to the Mo-molybdopterin site; these read YE and GIK.

This sequence belongs to the MsrP family. As to quaternary structure, heterodimer of a catalytic subunit (MsrP) and a heme-binding subunit (MsrQ). Mo-molybdopterin is required as a cofactor. Post-translationally, predicted to be exported by the Tat system. The position of the signal peptide cleavage has not been experimentally proven.

It is found in the periplasm. It carries out the reaction L-methionyl-[protein] + a quinone + H2O = L-methionyl-(S)-S-oxide-[protein] + a quinol. The catalysed reaction is L-methionyl-[protein] + a quinone + H2O = L-methionyl-(R)-S-oxide-[protein] + a quinol. In terms of biological role, part of the MsrPQ system that repairs oxidized periplasmic proteins containing methionine sulfoxide residues (Met-O), using respiratory chain electrons. Thus protects these proteins from oxidative-stress damage caused by reactive species of oxygen and chlorine generated by the host defense mechanisms. MsrPQ is essential for the maintenance of envelope integrity under bleach stress, rescuing a wide series of structurally unrelated periplasmic proteins from methionine oxidation. The catalytic subunit MsrP is non-stereospecific, being able to reduce both (R-) and (S-) diastereoisomers of methionine sulfoxide. The sequence is that of Protein-methionine-sulfoxide reductase catalytic subunit MsrP from Brucella melitensis biotype 1 (strain ATCC 23456 / CCUG 17765 / NCTC 10094 / 16M).